The chain runs to 209 residues: uncharacterized protein (209 aa).

Positions 1 to 19 are cleaved as a signal peptide; the sequence is MGYFPYLAVFVCLLASGDA. N-linked (GlcNAc...) asparagine glycans are attached at residues asparagine 41 and asparagine 109.

Component of the acid-soluble organic matrix of prismatic shell layers (at protein level).

It localises to the secreted. This is an uncharacterized protein from Haliotis asinina (Donkey's ear abalone).